The primary structure comprises 382 residues: Porin-like protein BU359 (382 aa).

Positions Met1–Ala23 are cleaved as a signal peptide.

Belongs to the Gram-negative porin family. In terms of assembly, homotrimer.

It localises to the cell outer membrane. Functionally, forms pores that allow passive diffusion of small molecules across the membrane. The polypeptide is Porin-like protein BU359 (Buchnera aphidicola subsp. Acyrthosiphon pisum (strain APS) (Acyrthosiphon pisum symbiotic bacterium)).